Reading from the N-terminus, the 399-residue chain is DNA polymerase IV (399 aa).

Residues 5–187 (ILHCDLNNFY…LPVEALLYVG (183 aa)) form the UmuC domain. The Mg(2+) site is built by aspartate 9 and aspartate 105. Glutamate 106 is a catalytic residue.

Belongs to the DNA polymerase type-Y family. As to quaternary structure, monomer. Mg(2+) is required as a cofactor.

It localises to the cytoplasm. The catalysed reaction is DNA(n) + a 2'-deoxyribonucleoside 5'-triphosphate = DNA(n+1) + diphosphate. In terms of biological role, poorly processive, error-prone DNA polymerase involved in untargeted mutagenesis. Copies undamaged DNA at stalled replication forks, which arise in vivo from mismatched or misaligned primer ends. These misaligned primers can be extended by PolIV. Exhibits no 3'-5' exonuclease (proofreading) activity. May be involved in translesional synthesis, in conjunction with the beta clamp from PolIII. This is DNA polymerase IV from Acetivibrio thermocellus (strain ATCC 27405 / DSM 1237 / JCM 9322 / NBRC 103400 / NCIMB 10682 / NRRL B-4536 / VPI 7372) (Clostridium thermocellum).